Here is a 245-residue protein sequence, read N- to C-terminus: NAD-dependent protein deacylase (245 aa).

The Deacetylase sirtuin-type domain maps to 1–237 (MNFPYRNIVV…PKLVEELLAH (237 aa)). Residue 13-32 (GAGISAESGIQTFRAQDGLW) coordinates NAD(+). Substrate-binding residues include Tyr57 and Arg60. Residue 94-97 (QNID) participates in NAD(+) binding. The active-site Proton acceptor is His112. Positions 120 and 139 each coordinate Zn(2+). NAD(+) contacts are provided by residues 179 to 181 (GTS), 205 to 207 (NLE), and Ala223.

This sequence belongs to the sirtuin family. Class III subfamily. It depends on Zn(2+) as a cofactor.

Its subcellular location is the cytoplasm. It catalyses the reaction N(6)-acetyl-L-lysyl-[protein] + NAD(+) + H2O = 2''-O-acetyl-ADP-D-ribose + nicotinamide + L-lysyl-[protein]. It carries out the reaction N(6)-succinyl-L-lysyl-[protein] + NAD(+) + H2O = 2''-O-succinyl-ADP-D-ribose + nicotinamide + L-lysyl-[protein]. Its function is as follows. NAD-dependent lysine deacetylase and desuccinylase that specifically removes acetyl and succinyl groups on target proteins. Modulates the activities of several proteins which are inactive in their acylated form. The sequence is that of NAD-dependent protein deacylase from Vibrio vulnificus (strain CMCP6).